The chain runs to 271 residues: Tumor necrosis factor receptor superfamily member 4 (271 aa).

Residues 1–19 (MYVWVQQPTAFLLLGLSLG) form the signal peptide. The Extracellular segment spans residues 20–210 (VTVKLNCVKD…TPTLVAPEGP (191 aa)). 2 TNFR-Cys repeats span residues 25–60 (NCVKDTYPSGHKCCRECQPGHGMVSRCDHTRDTVCH) and 61–102 (PCEP…DTVC). Disulfide bonds link C26-C37, C38-C51, C41-C59, C62-C76, C79-C94, C82-C102, C104-C122, and C125-C138. The TNFR-Cys 3; truncated repeat unit spans residues 103–123 (QCRPGTQPRQDSSHKLGVDCV). The stretch at 124–164 (PCPPGHFSPGSNQACKPWTNCTLSGKQIRHPASNSLDTVCE) is one TNFR-Cys 4 repeat. N143 carries N-linked (GlcNAc...) asparagine glycosylation. C144 and C163 form a disulfide bridge. A helical membrane pass occupies residues 211–235 (AFAVILGLGLGLLAPLTVLLALYLL). The Cytoplasmic segment spans residues 236–271 (RKAWRSPNTPKPCWGNSFRTPIQEEQTDTHFTLAKI).

In terms of assembly, interacts with TRAF2, TRAF3 and TRAF5. In terms of tissue distribution, activated T-cells.

Its subcellular location is the membrane. In terms of biological role, receptor for TNFSF4/OX40L/GP34. Is a costimulatory molecule implicated in long-term T-cell immunity. In Rattus norvegicus (Rat), this protein is Tumor necrosis factor receptor superfamily member 4 (Tnfrsf4).